Reading from the N-terminus, the 587-residue chain is MSADSKVQLTALLRAALKSIAPELADTPIHLERPKQAGHGDFATNLALQLAKPLRRRPRELAELLLAELPRSTLVAATEVAGAGFINFTLAAGAKTAAVGTVLERGAEFGRGARNGTSVQLEFVSANPTGPLHVGHGRGAAYGASLAAVLDFAGSDVTREYYINDAGRQMDILALSTWLRYLALYGLDIPFPPNAYQGDYVVDMARAMREGHQDRFAGFTIEQVLEGAPGLPVAERKDDEAKTQREDHLDMLIANAKRLLGEDYHFVHGFALNEQLGDGRDDLEEFGVHFDKWFSEKSLFDTGLVDRAVAELEKRGHVYLQDGAKWFRSTAFGDEKDRVVQRENGLYTYFASDIAYHLNKYERGYDRIIDIWGADHHGYIPRVKGAIAALGLPPEKLEVALVQFAVLYRNGQKASMSTRSGEFVTLRELRREVGNDACRFFYVLRKSDQHLDFDLDLAKSQSNENPVYYVQYAHARVCSVLEQWGGEAAELRAAQLDLLGNERELALCARLGGFPELIQNAAADHAPHQIAFYLKDLAAEFHSWYNAERMLVDDPALRLARLALATAVRQVLATALALLGVSAPQSM.

A 'HIGH' region motif is present at residues 126–136; sequence ANPTGPLHVGH.

Belongs to the class-I aminoacyl-tRNA synthetase family. In terms of assembly, monomer.

Its subcellular location is the cytoplasm. It catalyses the reaction tRNA(Arg) + L-arginine + ATP = L-arginyl-tRNA(Arg) + AMP + diphosphate. The chain is Arginine--tRNA ligase from Aromatoleum aromaticum (strain DSM 19018 / LMG 30748 / EbN1) (Azoarcus sp. (strain EbN1)).